The sequence spans 151 residues: U-scoloptoxin(17)-Er2a (151 aa).

The N-terminal stretch at methionine 1–alanine 22 is a signal peptide.

Belongs to the scoloptoxin-17 family. In terms of processing, contains 5 disulfide bonds. In terms of tissue distribution, expressed by the venom gland.

The protein resides in the secreted. In Ethmostigmus rubripes (Giant centipede), this protein is U-scoloptoxin(17)-Er2a.